Reading from the N-terminus, the 327-residue chain is Biotin synthase (327 aa).

The Radical SAM core domain occupies 48-278 (YCGDGVGLCM…DRHITVCGGR (231 aa)). [4Fe-4S] cluster-binding residues include Cys66, Cys70, and Cys73. [2Fe-2S] cluster-binding residues include Ser143 and Cys203.

This sequence belongs to the radical SAM superfamily. Biotin synthase family. In terms of assembly, homodimer. [4Fe-4S] cluster serves as cofactor. [2Fe-2S] cluster is required as a cofactor.

It catalyses the reaction (4R,5S)-dethiobiotin + (sulfur carrier)-SH + 2 reduced [2Fe-2S]-[ferredoxin] + 2 S-adenosyl-L-methionine = (sulfur carrier)-H + biotin + 2 5'-deoxyadenosine + 2 L-methionine + 2 oxidized [2Fe-2S]-[ferredoxin]. It participates in cofactor biosynthesis; biotin biosynthesis; biotin from 7,8-diaminononanoate: step 2/2. Functionally, catalyzes the conversion of dethiobiotin (DTB) to biotin by the insertion of a sulfur atom into dethiobiotin via a radical-based mechanism. This Syntrophotalea carbinolica (strain DSM 2380 / NBRC 103641 / GraBd1) (Pelobacter carbinolicus) protein is Biotin synthase.